The sequence spans 159 residues: Ribosomal RNA large subunit methyltransferase H (159 aa).

Residues L76, G107, and 126–131 (LSKLTM) each bind S-adenosyl-L-methionine.

Belongs to the RNA methyltransferase RlmH family. As to quaternary structure, homodimer.

The protein localises to the cytoplasm. The enzyme catalyses pseudouridine(1915) in 23S rRNA + S-adenosyl-L-methionine = N(3)-methylpseudouridine(1915) in 23S rRNA + S-adenosyl-L-homocysteine + H(+). Functionally, specifically methylates the pseudouridine at position 1915 (m3Psi1915) in 23S rRNA. The chain is Ribosomal RNA large subunit methyltransferase H from Acinetobacter baumannii (strain AB307-0294).